Here is a 347-residue protein sequence, read N- to C-terminus: NADH-ubiquinone oxidoreductase chain 2 (347 aa).

10 consecutive transmembrane segments (helical) span residues 1–21 (MNPI…TIVM), 25–45 (HWLT…PMLM), 59–79 (YFLT…INLM), 96–116 (IILT…FWVP), 148–168 (IINL…GGWG), 178–198 (IMAY…IYNP), 200–220 (LTML…MLLI), 237–257 (MPLI…LPPL), 274–294 (NSII…YFYM), and 326–346 (LSPL…MMIL).

It belongs to the complex I subunit 2 family. As to quaternary structure, core subunit of respiratory chain NADH dehydrogenase (Complex I) which is composed of 45 different subunits. Interacts with TMEM242.

It localises to the mitochondrion inner membrane. It carries out the reaction a ubiquinone + NADH + 5 H(+)(in) = a ubiquinol + NAD(+) + 4 H(+)(out). Its function is as follows. Core subunit of the mitochondrial membrane respiratory chain NADH dehydrogenase (Complex I) which catalyzes electron transfer from NADH through the respiratory chain, using ubiquinone as an electron acceptor. Essential for the catalytic activity and assembly of complex I. This Gardnerycteris crenulata (Striped hairy-nosed bat) protein is NADH-ubiquinone oxidoreductase chain 2.